The sequence spans 410 residues: Mating-type locus allele B7 protein (410 aa).

Residues 1–110 (MSSDPNFSLT…VNVGSPAVGC (110 aa)) are variable domain between B alleles. The segment at residues 107 to 184 (AVGCRNLSED…NARRRSGWSH (78 aa)) is a DNA-binding region (homeobox; TALE-type). The segment at 111-410 (RNLSEDLPAY…PFLCLSVAFV (300 aa)) is highly conserved between B alleles. 3 disordered regions span residues 202–225 (RAKL…SNNL), 278–336 (TPKP…PELS), and 374–394 (ARGN…QPDE). The short motif at 276 to 308 (KKTPKPGMPRPVTTVAKRQPARKTKPAAKPNSR) is the Nuclear localization signal element. The segment covering 306-336 (NSRTANPRASTTPSIDSTLDSSKLESTPELS) has biased composition (polar residues). The tract at residues 333-410 (PELSMCSTAD…PFLCLSVAFV (78 aa)) is not essential for B7 function. Positions 375-388 (RGNRKVKALPKRAG) are enriched in basic residues.

Belongs to the TALE/M-ATYP homeobox family.

Its subcellular location is the nucleus. Its function is as follows. The B locus has at least 25 alleles, and any combination of two different B alleles yields a multimeric regulatory protein, that activates genes responsible for the pathogenicity and for the sexual development of the fungus within the corn plant. The chain is Mating-type locus allele B7 protein from Mycosarcoma maydis (Corn smut fungus).